A 129-amino-acid polypeptide reads, in one-letter code: MSVLPSHLKYADSHEWVYLDEEGHAVVGITDFAQESLGDLMDVHLPEVGADIDQGEEIMSLESVKAASDIFSPLSGEVVAVNTELEDEPERVNDEPYDGGWLFKLAPHDLSEMDDLLSDVDYQGLIDQS.

The 83-residue stretch at 24–106 (HAVVGITDFA…YDGGWLFKLA (83 aa)) folds into the Lipoyl-binding domain. Lys-65 is modified (N6-lipoyllysine).

Belongs to the GcvH family. As to quaternary structure, the glycine cleavage system is composed of four proteins: P, T, L and H. (R)-lipoate serves as cofactor.

Its function is as follows. The glycine cleavage system catalyzes the degradation of glycine. The H protein shuttles the methylamine group of glycine from the P protein to the T protein. The sequence is that of Glycine cleavage system H protein from Hydrogenovibrio crunogenus (strain DSM 25203 / XCL-2) (Thiomicrospira crunogena).